The chain runs to 583 residues: Complement factor I (583 aa).

Positions Met-1 to Cys-18 are cleaved as a signal peptide. Cystine bridges form between Cys-33-Cys-255, Cys-43-Cys-54, Cys-48-Cys-59, Cys-61-Cys-93, Cys-67-Cys-86, Cys-75-Cys-106, Cys-141-Cys-181, Cys-154-Cys-214, Cys-186-Cys-196, Cys-229-Cys-247, Cys-259-Cys-271, Cys-266-Cys-284, Cys-278-Cys-293, Cys-327-Cys-453, Cys-365-Cys-381, and Cys-373-Cys-444. The Kazal-like domain occupies Ile-55 to Ala-108. Residues Asn-70, Asn-103, Asn-173, and Asn-177 are each glycosylated (N-linked (GlcNAc...) asparagine). Positions Val-114 to Val-212 constitute an SRCR domain. LDL-receptor class A domains follow at residues Val-213–Lys-257 and Ala-258–Glu-294. Residues Lys-239, Asp-242, Ile-244, Asp-246, Asp-252, and Glu-253 each coordinate Ca(2+). Ca(2+) contacts are provided by Tyr-276, Asn-279, Glu-281, Asp-283, Asp-289, and Glu-290. The Peptidase S1 domain occupies Ile-340 to Gly-574. Catalysis depends on charge relay system residues His-380 and Asp-429. N-linked (GlcNAc...) asparagine glycans are attached at residues Asn-464 and Asn-494. 3 cysteine pairs are disulfide-bonded: Cys-467–Cys-531, Cys-495–Cys-510, and Cys-521–Cys-550. Ser-525 serves as the catalytic Charge relay system. N-linked (GlcNAc...) asparagine glycosylation is present at Asn-536.

This sequence belongs to the peptidase S1 family. Heterodimer of a light and heavy chains; disulfide-linked. The fully processed and mature protein circulates as a zymogen, and is allosterically activated by substrate-induced remodeling of the active site. As to expression, plasma.

It is found in the secreted. The protein resides in the extracellular space. It carries out the reaction Inactivates complement subcomponents C3b, iC3b and C4b by proteolytic cleavage.. Responsible for cleaving the alpha-chains of C4b and C3b in the presence of the cofactors C4-binding protein and factor H respectively. The sequence is that of Complement factor I (CFI) from Pongo abelii (Sumatran orangutan).